The primary structure comprises 509 residues: Cytochrome P450 monooxygenase CYP512U6 (509 aa).

Residues 12–29 (VFACVAVVIAIYAVRWYT) form a helical membrane-spanning segment. Heme is bound at residue Cys446.

The protein belongs to the cytochrome P450 family. Requires heme as cofactor.

It is found in the membrane. It catalyses the reaction ganoderate DM + reduced [NADPH--hemoprotein reductase] + O2 = hainanate A + oxidized [NADPH--hemoprotein reductase] + H2O + H(+). The catalysed reaction is ganoderate TR + reduced [NADPH--hemoprotein reductase] + O2 = ganoderate Jc + oxidized [NADPH--hemoprotein reductase] + H2O + H(+). The protein operates within secondary metabolite biosynthesis; terpenoid biosynthesis. Functionally, cytochrome P450 monooxygenase that hydroxylates the ganoderic acids DM and TR at the C-23 position to produce hainanic acid A and ganoderic acid Jc, respectively. The chain is Cytochrome P450 monooxygenase CYP512U6 from Ganoderma lucidum (Ling zhi medicinal fungus).